Here is a 389-residue protein sequence, read N- to C-terminus: Cytochrome b (389 aa).

4 helical membrane passes run 36-56 (MGSL…FLAM), 80-102 (WLIR…THIA), 117-137 (VWTV…LGYC), and 183-203 (FFAF…MHMM). Heme b contacts are provided by His-86 and His-100. The heme b site is built by His-187 and His-201. Residue His-206 coordinates a ubiquinone. 4 consecutive transmembrane segments (helical) span residues 229–249 (FVFK…LFVF), 293–313 (LLGV…PITD), 325–345 (LSKF…IIGM), and 352–372 (FVLI…IIVP).

The protein belongs to the cytochrome b family. In terms of assembly, fungal cytochrome b-c1 complex contains 10 subunits; 3 respiratory subunits, 2 core proteins and 5 low-molecular weight proteins. Cytochrome b-c1 complex is a homodimer. It depends on heme b as a cofactor.

It localises to the mitochondrion inner membrane. Its function is as follows. Component of the ubiquinol-cytochrome c reductase complex (complex III or cytochrome b-c1 complex) that is part of the mitochondrial respiratory chain. The b-c1 complex mediates electron transfer from ubiquinol to cytochrome c. Contributes to the generation of a proton gradient across the mitochondrial membrane that is then used for ATP synthesis. In Vanderwaltozyma polyspora (strain ATCC 22028 / DSM 70294 / BCRC 21397 / CBS 2163 / NBRC 10782 / NRRL Y-8283 / UCD 57-17) (Kluyveromyces polysporus), this protein is Cytochrome b (COB).